Reading from the N-terminus, the 151-residue chain is Deoxyuridine 5'-triphosphate nucleotidohydrolase (151 aa).

Substrate-binding positions include 70 to 72 (RSG), Asn-83, 87 to 89 (LID), and Met-97.

Belongs to the dUTPase family. Mg(2+) is required as a cofactor.

It catalyses the reaction dUTP + H2O = dUMP + diphosphate + H(+). It functions in the pathway pyrimidine metabolism; dUMP biosynthesis; dUMP from dCTP (dUTP route): step 2/2. In terms of biological role, this enzyme is involved in nucleotide metabolism: it produces dUMP, the immediate precursor of thymidine nucleotides and it decreases the intracellular concentration of dUTP so that uracil cannot be incorporated into DNA. This is Deoxyuridine 5'-triphosphate nucleotidohydrolase from Shigella sonnei (strain Ss046).